The chain runs to 192 residues: Probable GTP-binding protein EngB (192 aa).

Residues 22–192 (NLPQIVIVGR…QVLSIFEKYA (171 aa)) form the EngB-type G domain. GTP-binding positions include 30-37 (GRSNVGKS), 57-61 (GKTRG), 75-78 (DLPG), 142-145 (TKAD), and 173-175 (FSA). Positions 37 and 59 each coordinate Mg(2+).

Belongs to the TRAFAC class TrmE-Era-EngA-EngB-Septin-like GTPase superfamily. EngB GTPase family. The cofactor is Mg(2+).

Necessary for normal cell division and for the maintenance of normal septation. The protein is Probable GTP-binding protein EngB of Thermoanaerobacter pseudethanolicus (strain ATCC 33223 / 39E) (Clostridium thermohydrosulfuricum).